The sequence spans 284 residues: Nitrogenase iron protein 1 (284 aa).

17–24 (GKGGIGKS) lines the ATP pocket. Residue Cys105 participates in [4Fe-4S] cluster binding. Arg108 is modified (ADP-ribosylarginine; by dinitrogenase reductase ADP-ribosyltransferase). Cys140 contacts [4Fe-4S] cluster.

This sequence belongs to the NifH/BchL/ChlL family. Homodimer. The cofactor is [4Fe-4S] cluster. In terms of processing, the reversible ADP-ribosylation of Arg-108 inactivates the nitrogenase reductase and regulates nitrogenase activity.

It carries out the reaction N2 + 8 reduced [2Fe-2S]-[ferredoxin] + 16 ATP + 16 H2O = H2 + 8 oxidized [2Fe-2S]-[ferredoxin] + 2 NH4(+) + 16 ADP + 16 phosphate + 6 H(+). In terms of biological role, the key enzymatic reactions in nitrogen fixation are catalyzed by the nitrogenase complex, which has 2 components: the iron protein and the molybdenum-iron protein. The chain is Nitrogenase iron protein 1 (nifH1) from Methanothermococcus thermolithotrophicus (Methanococcus thermolithotrophicus).